The sequence spans 58 residues: Small ribosomal subunit protein bS21 (58 aa).

Residues 35-58 are disordered; that stretch reads REHYEKPSVKRKKKSEAARKRKFK. The span at 43–58 shows a compositional bias: basic residues; the sequence is VKRKKKSEAARKRKFK.

It belongs to the bacterial ribosomal protein bS21 family.

The sequence is that of Small ribosomal subunit protein bS21 from Ruminiclostridium cellulolyticum (strain ATCC 35319 / DSM 5812 / JCM 6584 / H10) (Clostridium cellulolyticum).